A 500-amino-acid chain; its full sequence is Protein nucleotidyltransferase YdiU (500 aa).

Residues Gly96, Gly98, Arg99, Lys119, Asp131, Gly132, Arg182, and Arg189 each contribute to the ATP site. The active-site Proton acceptor is the Asp258. Mg(2+) contacts are provided by Asn259 and Asp268. Asp268 is a binding site for ATP.

It belongs to the SELO family. It depends on Mg(2+) as a cofactor. Mn(2+) serves as cofactor.

The enzyme catalyses L-seryl-[protein] + ATP = 3-O-(5'-adenylyl)-L-seryl-[protein] + diphosphate. The catalysed reaction is L-threonyl-[protein] + ATP = 3-O-(5'-adenylyl)-L-threonyl-[protein] + diphosphate. It carries out the reaction L-tyrosyl-[protein] + ATP = O-(5'-adenylyl)-L-tyrosyl-[protein] + diphosphate. It catalyses the reaction L-histidyl-[protein] + UTP = N(tele)-(5'-uridylyl)-L-histidyl-[protein] + diphosphate. The enzyme catalyses L-seryl-[protein] + UTP = O-(5'-uridylyl)-L-seryl-[protein] + diphosphate. The catalysed reaction is L-tyrosyl-[protein] + UTP = O-(5'-uridylyl)-L-tyrosyl-[protein] + diphosphate. In terms of biological role, nucleotidyltransferase involved in the post-translational modification of proteins. It can catalyze the addition of adenosine monophosphate (AMP) or uridine monophosphate (UMP) to a protein, resulting in modifications known as AMPylation and UMPylation. The polypeptide is Protein nucleotidyltransferase YdiU (Rhizobium leguminosarum bv. trifolii (strain WSM2304)).